Here is a 162-residue protein sequence, read N- to C-terminus: Regulatory protein RecX (162 aa).

This sequence belongs to the RecX family.

Its subcellular location is the cytoplasm. In terms of biological role, modulates RecA activity. In Pectobacterium atrosepticum (strain SCRI 1043 / ATCC BAA-672) (Erwinia carotovora subsp. atroseptica), this protein is Regulatory protein RecX.